We begin with the raw amino-acid sequence, 197 residues long: DNA-directed RNA polymerases I, II, and III subunit rpabc1 (197 aa).

Belongs to the archaeal Rpo5/eukaryotic RPB5 RNA polymerase subunit family. As to quaternary structure, component of the RNA polymerase I (Pol I), RNA polymerase II (Pol II) and RNA polymerase III (Pol III) complexes consisting of at least 13, 12 and 17 subunits, respectively. In RNA Pol II, this subunit is present in 2-fold molar excess over the other subunits.

The protein resides in the nucleus. Functionally, DNA-dependent RNA polymerase catalyzes the transcription of DNA into RNA using the four ribonucleoside triphosphates as substrates. Common component of RNA polymerases I, II and III which synthesize ribosomal RNA precursors, mRNA precursors and many functional non-coding RNAs, and small RNAs, such as 5S rRNA and tRNAs, respectively. Pol II is the central component of the basal RNA polymerase II transcription machinery. Pols are composed of mobile elements that move relative to each other. In Pol II, RPB5 is part of the lower jaw surrounding the central large cleft and thought to grab the incoming DNA template. Seems to be the major component in this process. The sequence is that of DNA-directed RNA polymerases I, II, and III subunit rpabc1 (polr2e) from Dictyostelium discoideum (Social amoeba).